The following is a 148-amino-acid chain: Transcriptional regulator MraZ (148 aa).

SpoVT-AbrB domains are found at residues 5–53 (ETAI…VEKE) and 82–125 (SALL…SEQA).

This sequence belongs to the MraZ family. Forms oligomers.

Its subcellular location is the cytoplasm. It is found in the nucleoid. This is Transcriptional regulator MraZ from Xylella fastidiosa (strain Temecula1 / ATCC 700964).